Here is a 332-residue protein sequence, read N- to C-terminus: NADH-quinone oxidoreductase subunit H (332 aa).

9 helical membrane-spanning segments follow: residues 8 to 28 (IIEC…LAGF), 44 to 66 (IGPN…KLFA), 78 to 98 (PIFI…MAPI), 120 to 140 (VGIL…LLAG), 157 to 177 (IQFL…LMII), 196 to 216 (WLIF…YVEL), 245 to 265 (MFFI…SLVF), 274 to 294 (FIPG…LFMW), and 312 to 332 (WKIM…ILLF).

It belongs to the complex I subunit 1 family. NDH-1 is composed of 14 different subunits. Subunits NuoA, H, J, K, L, M, N constitute the membrane sector of the complex.

The protein resides in the cell inner membrane. It carries out the reaction a quinone + NADH + 5 H(+)(in) = a quinol + NAD(+) + 4 H(+)(out). NDH-1 shuttles electrons from NADH, via FMN and iron-sulfur (Fe-S) centers, to quinones in the respiratory chain. The immediate electron acceptor for the enzyme in this species is believed to be ubiquinone. Couples the redox reaction to proton translocation (for every two electrons transferred, four hydrogen ions are translocated across the cytoplasmic membrane), and thus conserves the redox energy in a proton gradient. This subunit may bind ubiquinone. This chain is NADH-quinone oxidoreductase subunit H, found in Helicobacter hepaticus (strain ATCC 51449 / 3B1).